The following is a 54-amino-acid chain: Protein YmjE (54 aa).

The protein is Protein YmjE of Escherichia coli (strain K12).